The primary structure comprises 152 residues: SsrA-binding protein (152 aa).

The protein belongs to the SmpB family.

The protein resides in the cytoplasm. Functionally, required for rescue of stalled ribosomes mediated by trans-translation. Binds to transfer-messenger RNA (tmRNA), required for stable association of tmRNA with ribosomes. tmRNA and SmpB together mimic tRNA shape, replacing the anticodon stem-loop with SmpB. tmRNA is encoded by the ssrA gene; the 2 termini fold to resemble tRNA(Ala) and it encodes a 'tag peptide', a short internal open reading frame. During trans-translation Ala-aminoacylated tmRNA acts like a tRNA, entering the A-site of stalled ribosomes, displacing the stalled mRNA. The ribosome then switches to translate the ORF on the tmRNA; the nascent peptide is terminated with the 'tag peptide' encoded by the tmRNA and targeted for degradation. The ribosome is freed to recommence translation, which seems to be the essential function of trans-translation. In Rickettsia canadensis (strain McKiel), this protein is SsrA-binding protein.